The chain runs to 208 residues: Thymidylate kinase (208 aa).

7–14 (GIDGSGKS) serves as a coordination point for ATP.

It belongs to the thymidylate kinase family.

It carries out the reaction dTMP + ATP = dTDP + ADP. In terms of biological role, phosphorylation of dTMP to form dTDP in both de novo and salvage pathways of dTTP synthesis. The protein is Thymidylate kinase of Kosmotoga olearia (strain ATCC BAA-1733 / DSM 21960 / TBF 19.5.1).